Consider the following 461-residue polypeptide: Putative ankyrin repeat protein FPV218 (461 aa).

ANK repeat units follow at residues 1–28 (MLSL…HPDS), 31–61 (KGFY…NPNN), 65–94 (ETVS…DTSL), 96–116 (PLYV…DVNV), 120–149 (ESRS…NVNV), 153–182 (KGLS…RVNI), 186–213 (LGRL…PIDI), 217–248 (NGST…ALDN), 250–277 (CNSP…DITI), 281–312 (CGNT…LMRE), 358–385 (NGPT…NVQY), and 431–460 (LPYE…LKNK).

This is Putative ankyrin repeat protein FPV218 from Fowlpox virus (strain NVSL) (FPV).